The following is a 29-amino-acid chain: Cysteine-rich venom protein 25-A (29 aa).

It belongs to the CRISP family. Contains 8 disulfide bonds. As to expression, expressed by the venom gland.

Its subcellular location is the secreted. The protein is Cysteine-rich venom protein 25-A of Naja haje haje (Egyptian cobra).